Here is a 1071-residue protein sequence, read N- to C-terminus: Nonribosomal peptide synthetase flvI (1071 aa).

Residues 33 to 417 (RRVLEQHDAP…GSLHFISRKD (385 aa)) form an adenylation region. Residues 552–628 (MPLTEIELKM…MLCQNIKTDV (77 aa)) enclose the Carrier domain. Residue Ser-589 is modified to O-(pantetheine 4'-phosphoryl)serine. The interval 689–961 (NYTLRLEFKL…IDDRDIEQLS (273 aa)) is condensation.

The protein belongs to the NRP synthetase family.

It catalyses the reaction (2S)-5,5-dimethylpiperidine-2-carboxylate + 10-hydroxy-pre-flavunoidine + ATP = flavunoidine + AMP + diphosphate + H(+). Its pathway is secondary metabolite biosynthesis; terpenoid biosynthesis. Its function is as follows. Nonribosomal peptide synthetase; part of the gene cluster that mediates the biosynthesis of flavunoidine, an alkaloidal terpenoid with a tetracyclic cage-like core connected to dimethylcadaverine via a C-N bond and acylated with 5,5-dimethyl-L-pipecolate. The tetracyclic core is synthesized by the terpene cyclase flvE and the cytochrome P450 monooxygenase flvD. The terpene cyclase flvE catalyzes the cyclization of farnesyl pyrophosphate (FPP) to form (1R,4R,5S)-(+)-acoradiene and the cytochrome P450 monooxygenase flvD is then responsible for oxidative conversion of (1R,4R,5S)-(+)-acoradiene into the tetracyclic cage present in the final product flavunoidine. In parallel, the N-methyltransferase flvH dimethylates L-lysine to give N,N-dimethyl-L-Lysin which is decarboxylated by flvG to afford dimethylcadaverine. The terpene cyclase-like protein flvF is the enzyme that attaches the dimethylcadaverine precusor at the C-7 of the tetracyclic cage to yield pre-flavunoidine. The cytochrome monooxygenase flvC hydroxylates the C-10 position of pre-flavunoidine whereas the NRPS flvI acylates the terpenoid core at the hydroxylated C-10 with dimethylpipecolate to yield final flavunoidine. The bifunctional enzyme flvA and the dehydrogenase flvB are responsible for the synthesis of the dimethylpipecolate precursor. The PLP-dependent lyase domain of flvA might use L-O-acetyl-homoserine and alpha-keto-isovalerate to form an intermediary ketone that can cyclize intramolecularly to yield an imine. The imine can be reduced by flvB to yield the 6-carboxylated pipecolate. The C-terminal alpha-KG-dependent oxygenase domain of flvA is then proposed to catalyze the decarboxylation to yield dimethylpipecolate. The polypeptide is Nonribosomal peptide synthetase flvI (Aspergillus flavus (strain ATCC 200026 / FGSC A1120 / IAM 13836 / NRRL 3357 / JCM 12722 / SRRC 167)).